A 542-amino-acid chain; its full sequence is Importin subunit alpha-1 (542 aa).

Residues 1–29 are disordered; the sequence is MSASSRFIPEHRRQNYKGKGTFQADELRR. Residues 1–60 enclose the IBB domain; sequence MSASSRFIPEHRRQNYKGKGTFQADELRRRRETQQIEIRKQKREENLNKRRNLVDVQEPA. 8 ARM repeats span residues 114–155, 156–197, 198–240, 241–282, 283–324, 325–366, 367–408, and 409–453; these read IQKV…SSNQ, THVV…SPMC, RDHV…KNPQ, PDWN…ANEK, IQAI…DDVQ, TQVI…NSSQ, IQYV…GARR, and PDQI…GELD.

This sequence belongs to the importin alpha family. In terms of assembly, interacts with pap1.

Its subcellular location is the nucleus. Functionally, binds specifically and directly to substrates containing either a simple or bipartite NLS motif. Promotes docking of import substrates to the nuclear envelope. Seems to act as a cytosolic receptor for both simple and bipartite NLS motifs. Has an essential role in mitotic chromosome condensation. Involved in nuclear protein import. Required for efficient nuclear import of both an SV40 nuclear localization signal-containing reporter protein and the pap1 component of the stress response MAP kinase pathway. Required for proper mitotic progression. The protein is Importin subunit alpha-1 (cut15) of Schizosaccharomyces pombe (strain 972 / ATCC 24843) (Fission yeast).